The chain runs to 381 residues: Mannitol-1-phosphate 5-dehydrogenase (381 aa).

3 to 14 is an NAD(+) binding site; that stretch reads TLHFGAGNIGRG.

This sequence belongs to the mannitol dehydrogenase family.

The catalysed reaction is D-mannitol 1-phosphate + NAD(+) = beta-D-fructose 6-phosphate + NADH + H(+). This Aeromonas salmonicida (strain A449) protein is Mannitol-1-phosphate 5-dehydrogenase.